A 495-amino-acid polypeptide reads, in one-letter code: Taxoid 2-alpha-hydroxylase (495 aa).

The helical transmembrane segment at 17-37 (LQSSAILLTVVSGIIVIVILL) threads the bilayer. Cys441 serves as a coordination point for heme.

The protein belongs to the cytochrome P450 family.

The protein resides in the microsome membrane. The enzyme catalyses taxusin + reduced [NADPH--hemoprotein reductase] + O2 = 2alpha-hydroxytaxusin + oxidized [NADPH--hemoprotein reductase] + H2O + H(+). The catalysed reaction is 7beta-hydroxytaxusin + reduced [NADPH--hemoprotein reductase] + O2 = 2alpha,7beta-dihydroxytaxusin + oxidized [NADPH--hemoprotein reductase] + H2O + H(+). The protein operates within alkaloid biosynthesis; taxol biosynthesis. Catalyzes the conversion of taxusin to 2-alpha-hydroxytaxusin in taxol biosynthesis. Catalyzes the conversion of 7-beta-hydroxytaxusin to 2-alpha-7-beta-hydroxytaxusin in taxol biosynthesis. In Taxus canadensis (Canadian yew), this protein is Taxoid 2-alpha-hydroxylase.